The chain runs to 146 residues: Snaclec agkicetin-C subunit beta (146 aa).

The N-terminal stretch at 1 to 23 is a signal peptide; the sequence is MGRFIFVSFGLLVVFLSLSGTGA. Disulfide bonds link cysteine 25-cysteine 36, cysteine 53-cysteine 142, and cysteine 119-cysteine 134. Residues 32 to 143 form the C-type lectin domain; that stretch reads YEGNCYLVVK…CSRTQPFVCK (112 aa).

It belongs to the snaclec family. Heterodimer of subunits alpha and beta; disulfide-linked. In terms of tissue distribution, expressed by the venom gland.

Its subcellular location is the secreted. Is a potent glycoprotein Ibalpha (GP1BA) antagonist. Concentration-dependently inhibits botrocetin-, ristocetin- and low dose thrombin-induced platelet aggregation. Inhibits platelet adhesion only through inhibiting the vWF interaction with GP1BA, but has minimal effect on other platelet receptors, such as alpha-IIb/beta-3 (ITGA2B/ITGB3) or alpha-2/beta-1 (ITGA2/ITGB1). Causes an instant severe thrombocytopenia in rats and is not lethal to mice. The protein is Snaclec agkicetin-C subunit beta of Deinagkistrodon acutus (Hundred-pace snake).